The sequence spans 231 residues: Uracil-DNA glycosylase (231 aa).

Catalysis depends on Asp-74, which acts as the Proton acceptor.

Belongs to the uracil-DNA glycosylase (UDG) superfamily. UNG family.

It localises to the cytoplasm. It carries out the reaction Hydrolyzes single-stranded DNA or mismatched double-stranded DNA and polynucleotides, releasing free uracil.. Functionally, excises uracil residues from the DNA which can arise as a result of misincorporation of dUMP residues by DNA polymerase or due to deamination of cytosine. This Campylobacter jejuni (strain RM1221) protein is Uracil-DNA glycosylase.